Here is a 414-residue protein sequence, read N- to C-terminus: Esterase FrsA (414 aa).

It belongs to the FrsA family.

The enzyme catalyses a carboxylic ester + H2O = an alcohol + a carboxylate + H(+). Functionally, catalyzes the hydrolysis of esters. The sequence is that of Esterase FrsA from Citrobacter koseri (strain ATCC BAA-895 / CDC 4225-83 / SGSC4696).